The sequence spans 155 residues: Small ribosomal subunit protein uS7 (155 aa).

It belongs to the universal ribosomal protein uS7 family. In terms of assembly, part of the 30S ribosomal subunit. Contacts proteins S9 and S11.

Its function is as follows. One of the primary rRNA binding proteins, it binds directly to 16S rRNA where it nucleates assembly of the head domain of the 30S subunit. Is located at the subunit interface close to the decoding center, probably blocks exit of the E-site tRNA. In Amoebophilus asiaticus (strain 5a2), this protein is Small ribosomal subunit protein uS7.